The chain runs to 198 residues: RNA pyrophosphohydrolase (198 aa).

Residues 6–149 (GYRPNVGIVI…KKEVYRKAMK (144 aa)) enclose the Nudix hydrolase domain. The Nudix box signature appears at 38 to 59 (GGINDNESAEQAMYRELFEEVG).

This sequence belongs to the Nudix hydrolase family. RppH subfamily. Requires a divalent metal cation as cofactor.

Accelerates the degradation of transcripts by removing pyrophosphate from the 5'-end of triphosphorylated RNA, leading to a more labile monophosphorylated state that can stimulate subsequent ribonuclease cleavage. The sequence is that of RNA pyrophosphohydrolase from Pasteurella multocida (strain Pm70).